Here is a 65-residue protein sequence, read N- to C-terminus: Large ribosomal subunit protein bL35 (65 aa).

The tract at residues 1-26 is disordered; sequence MPKMKTHRGAAKRFKKTGSGKLKRAK.

The protein belongs to the bacterial ribosomal protein bL35 family.

This chain is Large ribosomal subunit protein bL35, found in Clostridium novyi (strain NT).